Reading from the N-terminus, the 498-residue chain is ATP synthase subunit beta, chloroplastic (498 aa).

Position 172–179 (G172–T179) interacts with ATP.

This sequence belongs to the ATPase alpha/beta chains family. As to quaternary structure, F-type ATPases have 2 components, CF(1) - the catalytic core - and CF(0) - the membrane proton channel. CF(1) has five subunits: alpha(3), beta(3), gamma(1), delta(1), epsilon(1). CF(0) has four main subunits: a(1), b(1), b'(1) and c(9-12).

The protein resides in the plastid. It is found in the chloroplast thylakoid membrane. The enzyme catalyses ATP + H2O + 4 H(+)(in) = ADP + phosphate + 5 H(+)(out). In terms of biological role, produces ATP from ADP in the presence of a proton gradient across the membrane. The catalytic sites are hosted primarily by the beta subunits. The protein is ATP synthase subunit beta, chloroplastic of Nicotiana tomentosiformis (Tobacco).